Reading from the N-terminus, the 262-residue chain is MIDQTAFIHPSSIVEDGAIIGAGVHIGPFCYIGSQVEIGAGTVLKSHVVVNGVTKIGRDNEIYQFTSIGEVNQDLKYAGEPTRVEIGDRNRIRESVTIHRGTTQGGGLTKVGSDNLLMINTHIAHDCVVGNRCILANNATLGGHVSVDDFAIIGGMTAVHQFCIIGAHVMVGGCSGVAQDVPPYVIAQGNHATPFGLNIEGLKRRGFEKDTLHAIRNAYKLLYRSGKTLDEVKPEIEALAAEHPAVQAFTDFFARSTRGIIR.

This sequence belongs to the transferase hexapeptide repeat family. LpxA subfamily. As to quaternary structure, homotrimer.

It localises to the cytoplasm. It catalyses the reaction a (3R)-hydroxyacyl-[ACP] + UDP-N-acetyl-alpha-D-glucosamine = a UDP-3-O-[(3R)-3-hydroxyacyl]-N-acetyl-alpha-D-glucosamine + holo-[ACP]. It participates in glycolipid biosynthesis; lipid IV(A) biosynthesis; lipid IV(A) from (3R)-3-hydroxytetradecanoyl-[acyl-carrier-protein] and UDP-N-acetyl-alpha-D-glucosamine: step 1/6. Functionally, involved in the biosynthesis of lipid A, a phosphorylated glycolipid that anchors the lipopolysaccharide to the outer membrane of the cell. This chain is Acyl-[acyl-carrier-protein]--UDP-N-acetylglucosamine O-acyltransferase, found in Pectobacterium carotovorum subsp. carotovorum (strain PC1).